A 137-amino-acid chain; its full sequence is Aspartate 1-decarboxylase (137 aa).

Serine 25 functions as the Schiff-base intermediate with substrate; via pyruvic acid in the catalytic mechanism. At serine 25 the chain carries Pyruvic acid (Ser). Threonine 57 serves as a coordination point for substrate. Tyrosine 58 acts as the Proton donor in catalysis. 73-75 is a binding site for substrate; sequence GAA.

The protein belongs to the PanD family. In terms of assembly, heterooctamer of four alpha and four beta subunits. The cofactor is pyruvate. Post-translationally, is synthesized initially as an inactive proenzyme, which is activated by self-cleavage at a specific serine bond to produce a beta-subunit with a hydroxyl group at its C-terminus and an alpha-subunit with a pyruvoyl group at its N-terminus.

It localises to the cytoplasm. It catalyses the reaction L-aspartate + H(+) = beta-alanine + CO2. The protein operates within cofactor biosynthesis; (R)-pantothenate biosynthesis; beta-alanine from L-aspartate: step 1/1. In terms of biological role, catalyzes the pyruvoyl-dependent decarboxylation of aspartate to produce beta-alanine. This chain is Aspartate 1-decarboxylase, found in Thermobifida fusca (strain YX).